A 447-amino-acid chain; its full sequence is Signal recognition particle protein (447 aa).

GTP is bound by residues 108–115 (GLQGSGKT), 190–194 (DTAGR), and 248–251 (TKLD).

This sequence belongs to the GTP-binding SRP family. SRP54 subfamily. In terms of assembly, part of the signal recognition particle protein translocation system, which is composed of SRP and FtsY. Interacts with RNA.

The protein localises to the cytoplasm. It catalyses the reaction GTP + H2O = GDP + phosphate + H(+). In terms of biological role, involved in targeting and insertion of nascent membrane proteins into the cytoplasmic membrane. Binds to the hydrophobic signal sequence of the ribosome-nascent chain (RNC) as it emerges from the ribosomes. The SRP-RNC complex is then targeted to the cytoplasmic membrane where it interacts with the SRP receptor FtsY. This is Signal recognition particle protein from Mycoplasma mycoides.